The following is a 93-amino-acid chain: MIMKPILIFLGIILMFIGFFMITLGMILPSSQENYEKPETEKTESSVEYSGIVMIGPIPIVFGNSPGLMILSVLIAILMIIWMFLFAFGIRIK.

2 helical membrane-spanning segments follow: residues 7–27 and 70–90; these read LIFLGIILMFIGFFMITLGMI and ILSVLIAILMIIWMFLFAFGI.

The protein localises to the cell membrane. This is an uncharacterized protein from Methanocaldococcus jannaschii (strain ATCC 43067 / DSM 2661 / JAL-1 / JCM 10045 / NBRC 100440) (Methanococcus jannaschii).